We begin with the raw amino-acid sequence, 201 residues long: Small ribosomal subunit protein uS4c (201 aa).

The region spanning methionine 89–leucine 152 is the S4 RNA-binding domain.

This sequence belongs to the universal ribosomal protein uS4 family. Part of the 30S ribosomal subunit. Contacts protein S5. The interaction surface between S4 and S5 is involved in control of translational fidelity.

It is found in the plastid. It localises to the chloroplast. One of the primary rRNA binding proteins, it binds directly to 16S rRNA where it nucleates assembly of the body of the 30S subunit. Functionally, with S5 and S12 plays an important role in translational accuracy. This Capsella bursa-pastoris (Shepherd's purse) protein is Small ribosomal subunit protein uS4c (rps4).